Consider the following 361-residue polypeptide: ETS translocation variant 3-like protein (361 aa).

The segment at residues 39 to 120 (IQLWHFILEL…KGKRFTYKFN (82 aa)) is a DNA-binding region (ETS). The tract at residues 178–201 (LTGQQTPRGPPETSGDKKGSSSSV) is disordered.

The protein belongs to the ETS family.

The protein resides in the nucleus. Functionally, transcriptional regulator. This Homo sapiens (Human) protein is ETS translocation variant 3-like protein (ETV3L).